A 476-amino-acid polypeptide reads, in one-letter code: Proline--tRNA ligase 2 (476 aa).

The protein belongs to the class-II aminoacyl-tRNA synthetase family. ProS type 3 subfamily. As to quaternary structure, homodimer.

Its subcellular location is the cytoplasm. It carries out the reaction tRNA(Pro) + L-proline + ATP = L-prolyl-tRNA(Pro) + AMP + diphosphate. In terms of biological role, catalyzes the attachment of proline to tRNA(Pro) in a two-step reaction: proline is first activated by ATP to form Pro-AMP and then transferred to the acceptor end of tRNA(Pro). The polypeptide is Proline--tRNA ligase 2 (Bacillus cereus (strain ATCC 10987 / NRS 248)).